A 100-amino-acid chain; its full sequence is C-X-C motif chemokine 11 (100 aa).

A signal peptide spans 1-21; that stretch reads MNRKVTAIALAAIIWATAAQG. Cystine bridges form between C30–C57 and C32–C74.

Belongs to the intercrine alpha (chemokine CxC) family. In terms of assembly, interacts with TNFAIP6 (via Link domain).

The protein localises to the secreted. Its function is as follows. Chemotactic for interleukin-activated T-cells but not unstimulated T-cells, neutrophils or monocytes. Induces calcium release in activated T-cells. Binds to CXCR3. May play an important role in CNS diseases which involve T-cell recruitment. May play a role in skin immune responses. This is C-X-C motif chemokine 11 (Cxcl11) from Mus musculus (Mouse).